A 231-amino-acid chain; its full sequence is 7-cyano-7-deazaguanine synthase (231 aa).

8–18 (FSGGQDSTTCL) contributes to the ATP binding site. Positions 188, 197, 200, and 203 each coordinate Zn(2+).

The protein belongs to the QueC family. Zn(2+) serves as cofactor.

The enzyme catalyses 7-carboxy-7-deazaguanine + NH4(+) + ATP = 7-cyano-7-deazaguanine + ADP + phosphate + H2O + H(+). The protein operates within purine metabolism; 7-cyano-7-deazaguanine biosynthesis. Catalyzes the ATP-dependent conversion of 7-carboxy-7-deazaguanine (CDG) to 7-cyano-7-deazaguanine (preQ(0)). The sequence is that of 7-cyano-7-deazaguanine synthase from Escherichia coli O1:K1 / APEC.